Consider the following 94-residue polypeptide: Small ribosomal subunit protein uS19 (94 aa).

Belongs to the universal ribosomal protein uS19 family.

Protein S19 forms a complex with S13 that binds strongly to the 16S ribosomal RNA. This chain is Small ribosomal subunit protein uS19, found in Elusimicrobium minutum (strain Pei191).